A 287-amino-acid polypeptide reads, in one-letter code: Uricase (287 aa).

Catalysis depends on charge relay system residues K11 and T58. 7 residues coordinate urate: T58, D59, F160, R177, V219, Q220, and N246. The Charge relay system role is filled by H248. Residues 285-287 (SRL) carry the Microbody targeting signal motif.

Belongs to the uricase family.

It localises to the peroxisome. It carries out the reaction urate + O2 + H2O = 5-hydroxyisourate + H2O2. The protein operates within purine metabolism; urate degradation; (S)-allantoin from urate: step 1/3. In terms of biological role, catalyzes the oxidation of uric acid to 5-hydroxyisourate, which is further processed to form (S)-allantoin. In Dictyostelium discoideum (Social amoeba), this protein is Uricase (uox).